The chain runs to 375 residues: Succinyl-diaminopimelate desuccinylase (375 aa).

His66 provides a ligand contact to Zn(2+). Residue Asp68 is part of the active site. Asp99 contributes to the Zn(2+) binding site. The Proton acceptor role is filled by Glu133. Zn(2+) is bound by residues Glu134, Glu162, and His348.

The protein belongs to the peptidase M20A family. DapE subfamily. As to quaternary structure, homodimer. Zn(2+) is required as a cofactor. Requires Co(2+) as cofactor.

It carries out the reaction N-succinyl-(2S,6S)-2,6-diaminopimelate + H2O = (2S,6S)-2,6-diaminopimelate + succinate. It functions in the pathway amino-acid biosynthesis; L-lysine biosynthesis via DAP pathway; LL-2,6-diaminopimelate from (S)-tetrahydrodipicolinate (succinylase route): step 3/3. Functionally, catalyzes the hydrolysis of N-succinyl-L,L-diaminopimelic acid (SDAP), forming succinate and LL-2,6-diaminopimelate (DAP), an intermediate involved in the bacterial biosynthesis of lysine and meso-diaminopimelic acid, an essential component of bacterial cell walls. In Alkalilimnicola ehrlichii (strain ATCC BAA-1101 / DSM 17681 / MLHE-1), this protein is Succinyl-diaminopimelate desuccinylase.